The chain runs to 726 residues: ATP-dependent permease MDL1, mitochondrial (726 aa).

A mitochondrion-targeting transit peptide spans 1–112 (MDPIRFGLSR…LAFLKLCVRH (112 aa)). 3 N-linked (GlcNAc...) asparagine glycosylation sites follow: Asn-66, Asn-113, and Asn-132. The next 5 helical transmembrane spans lie at 158 to 178 (FFIA…IPYI), 196 to 216 (IMGI…FLGS), 306 to 326 (GYMS…GEYV), 386 to 406 (GIFF…ILAL), and 423 to 443 (SFLL…GCFT). An ABC transmembrane type-1 domain is found at 158 to 447 (FFIAGSLLLV…LSGCFTDIMK (290 aa)). An ABC transporter domain is found at 482–719 (LSFRNVGFAY…GTNFYKLMRW (238 aa)). An N-linked (GlcNAc...) asparagine glycan is attached at Asn-502. 517–524 (APSGGGKS) is a binding site for ATP. Residues Asn-584, Asn-598, and Asn-668 are each glycosylated (N-linked (GlcNAc...) asparagine).

The protein belongs to the ABC transporter superfamily. ABCB family. Mitochondrial peptide exporter (TC 3.A.1.212) subfamily.

The protein resides in the mitochondrion inner membrane. Functionally, mediates export of peptides generated upon proteolysis of mitochondrial inner membrane proteins. In Schizosaccharomyces pombe (strain 972 / ATCC 24843) (Fission yeast), this protein is ATP-dependent permease MDL1, mitochondrial (mdl1).